Reading from the N-terminus, the 276-residue chain is NAD kinase (276 aa).

Asp67 serves as the catalytic Proton acceptor. Residues 67–68, Arg72, 136–137, Lys147, Arg164, Asp166, 177–182, Ala201, and Gln235 contribute to the NAD(+) site; these read DG, ND, and TAYALS.

This sequence belongs to the NAD kinase family. The cofactor is a divalent metal cation.

Its subcellular location is the cytoplasm. It carries out the reaction NAD(+) + ATP = ADP + NADP(+) + H(+). Its function is as follows. Involved in the regulation of the intracellular balance of NAD and NADP, and is a key enzyme in the biosynthesis of NADP. Catalyzes specifically the phosphorylation on 2'-hydroxyl of the adenosine moiety of NAD to yield NADP. The chain is NAD kinase from Thermococcus sibiricus (strain DSM 12597 / MM 739).